The sequence spans 357 residues: NAD kinase 1 (357 aa).

D68 functions as the Proton acceptor in the catalytic mechanism. NAD(+) is bound by residues 68 to 69 (DG), R73, 175 to 176 (ND), R186, D205, A240, and Q275.

Belongs to the NAD kinase family. A divalent metal cation is required as a cofactor.

It localises to the cytoplasm. The enzyme catalyses NAD(+) + ATP = ADP + NADP(+) + H(+). Functionally, involved in the regulation of the intracellular balance of NAD and NADP, and is a key enzyme in the biosynthesis of NADP. Catalyzes specifically the phosphorylation on 2'-hydroxyl of the adenosine moiety of NAD to yield NADP. This is NAD kinase 1 from Streptomyces avermitilis (strain ATCC 31267 / DSM 46492 / JCM 5070 / NBRC 14893 / NCIMB 12804 / NRRL 8165 / MA-4680).